The chain runs to 329 residues: MPILMPSAEVPTIDISPLSGDDAKAKQRVAQEINKAARGSGFFYASNHGVDVQLLQDVVNEFHRNMSDQEKHDLAINAYNKDNPHVRNGYYKAIKGKKAVESFCYLNPSFSDDHPMIKSETPMHEVNLWPDEEKHPRFRPFCEDYYRQLLRLSTVIMRGYALALGRREDFFDEALAEADTLSSVSLIRYPYLEEYPPVKTGADGTKLSFEDHLDVSMITVLYQTEVQNLQVETVDGWQDIPRSDEDFLVNCGTYMGHITHDYFPAPNHRVKFINAERLSLPFFLNAGHNSVIEPFVPEGAAGTVKNPTTSYGEYLQHGLRALIVKNGQT.

Residues R87, Y91, S183, and Y189 each contribute to the isopenicillin N site. N-[(5S)-5-amino-5-carboxypentanoyl]-L-cysteinyl-D-valine is bound by residues R87, Y91, S183, Y189, H212, and D214. The Fe2OG dioxygenase domain occupies 180-286; the sequence is TLSSVSLIRY…RLSLPFFLNA (107 aa). The Fe(2+) site is built by H212, D214, and H268. R277 lines the 2-oxoglutarate pocket. Isopenicillin N is bound at residue S279. Residue S279 participates in N-[(5S)-5-amino-5-carboxypentanoyl]-L-cysteinyl-D-valine binding.

Belongs to the iron/ascorbate-dependent oxidoreductase family. Requires Fe cation as cofactor. It depends on L-ascorbate as a cofactor.

It catalyses the reaction N-[(5S)-5-amino-5-carboxypentanoyl]-L-cysteinyl-D-valine + O2 = isopenicillin N + 2 H2O. Its pathway is antibiotic biosynthesis; penicillin G biosynthesis; penicillin G from L-alpha-aminoadipate and L-cysteine and L-valine: step 2/3. In terms of biological role, removes, in the presence of oxygen, 4 hydrogen atoms from delta-L-(alpha-aminoadipyl)-L-cysteinyl-D-valine (ACV) to form the azetidinone and thiazolidine rings of isopenicillin. The chain is Isopenicillin N synthase (pcbC) from Streptomyces jumonjinensis.